A 196-amino-acid chain; its full sequence is Peroxiredoxin TSA1-B (196 aa).

One can recognise a Thioredoxin domain in the interval 3-161; the sequence is PVVQQPAPSF…SLRLLEAFQF (159 aa). Residue 45–47 coordinates substrate; the sequence is TFV. Cys48 functions as the Cysteine sulfenic acid (-SOH) intermediate in the catalytic mechanism. Arg124 is a substrate binding site. Residues 173 to 196 are disordered; that stretch reads WHPGDETIKPSPEASKEYFNKVNK. The span at 175 to 196 shows a compositional bias: basic and acidic residues; the sequence is PGDETIKPSPEASKEYFNKVNK.

Belongs to the peroxiredoxin family. AhpC/Prx1 subfamily. As to quaternary structure, homodimer; disulfide-linked, upon oxidation.

The protein resides in the cell surface. It is found in the nucleus. Its subcellular location is the cytoplasm. It carries out the reaction a hydroperoxide + [thioredoxin]-dithiol = an alcohol + [thioredoxin]-disulfide + H2O. Functionally, thiol-specific peroxidase that catalyzes the reduction of hydrogen peroxide and organic hydroperoxides to water and alcohols, respectively. Plays a role in cell protection against oxidative stress by detoxifying peroxides and as sensor of hydrogen peroxide-mediated signaling events. Also involved in the correct composition of the hyphal cell wall. The chain is Peroxiredoxin TSA1-B from Candida albicans (strain SC5314 / ATCC MYA-2876) (Yeast).